Reading from the N-terminus, the 144-residue chain is Large ribosomal subunit protein uL16 (144 aa).

The protein belongs to the universal ribosomal protein uL16 family. As to quaternary structure, part of the 50S ribosomal subunit.

In terms of biological role, binds 23S rRNA and is also seen to make contacts with the A and possibly P site tRNAs. The chain is Large ribosomal subunit protein uL16 from Porphyromonas gingivalis (strain ATCC 33277 / DSM 20709 / CIP 103683 / JCM 12257 / NCTC 11834 / 2561).